Reading from the N-terminus, the 442-residue chain is Adenylosuccinate synthetase (442 aa).

GTP is bound by residues 16–22 (GDEGKGK) and 44–46 (GHT). Catalysis depends on D17, which acts as the Proton acceptor. Residues D17 and G44 each coordinate Mg(2+). Residues 17-20 (DEGK), 42-45 (NAGH), T133, R147, Q228, T243, and R307 each bind IMP. The active-site Proton donor is the H45. Substrate is bound at residue 303-309 (AVTGRPR). Residues R309, 335–337 (KLD), and 417–419 (STG) contribute to the GTP site.

Belongs to the adenylosuccinate synthetase family. In terms of assembly, homodimer. The cofactor is Mg(2+).

The protein localises to the cytoplasm. The enzyme catalyses IMP + L-aspartate + GTP = N(6)-(1,2-dicarboxyethyl)-AMP + GDP + phosphate + 2 H(+). The protein operates within purine metabolism; AMP biosynthesis via de novo pathway; AMP from IMP: step 1/2. Its function is as follows. Plays an important role in the de novo pathway of purine nucleotide biosynthesis. Catalyzes the first committed step in the biosynthesis of AMP from IMP. This is Adenylosuccinate synthetase from Koribacter versatilis (strain Ellin345).